A 319-amino-acid polypeptide reads, in one-letter code: tRNA dimethylallyltransferase (319 aa).

26 to 33 is an ATP binding site; the sequence is GPTAAGKS. Position 28–33 (28–33) interacts with substrate; the sequence is TAAGKS. Residues 51–54 are interaction with substrate tRNA; the sequence is DSMQ.

It belongs to the IPP transferase family. As to quaternary structure, monomer. Mg(2+) is required as a cofactor.

The enzyme catalyses adenosine(37) in tRNA + dimethylallyl diphosphate = N(6)-dimethylallyladenosine(37) in tRNA + diphosphate. Functionally, catalyzes the transfer of a dimethylallyl group onto the adenine at position 37 in tRNAs that read codons beginning with uridine, leading to the formation of N6-(dimethylallyl)adenosine (i(6)A). This is tRNA dimethylallyltransferase from Salinispora tropica (strain ATCC BAA-916 / DSM 44818 / JCM 13857 / NBRC 105044 / CNB-440).